The following is a 260-amino-acid chain: D-threitol dehydrogenase (260 aa).

Residue 21 to 50 (LVTGAASGIGAAIASAYATKGARIAAVDLN) participates in NAD(+) binding. Tyr-166 serves as the catalytic Proton acceptor. Lys-170 provides a ligand contact to NAD(+).

Belongs to the short-chain dehydrogenases/reductases (SDR) family.

It catalyses the reaction D-threitol + NAD(+) = D-erythrulose + NADH + H(+). It functions in the pathway carbohydrate metabolism; D-threitol degradation. Functionally, catalyzes the NAD-dependent reversible oxidation of D-threitol. Involved in the degradation pathway of D-threitol, that allows M.smegmatis to grow on this compound as the sole carbon source. Does not catalyze the oxidation of xylitol, L-sorbitol, and L-sorbose. This is D-threitol dehydrogenase from Mycolicibacterium smegmatis (strain ATCC 700084 / mc(2)155) (Mycobacterium smegmatis).